The chain runs to 288 residues: MNRQRPFQQMNDLMKRGLPKGKYAFTGTGLLLALGLAGFAVQTSLFNVDGGHRAIKYSRIGGIKNLIYPEGTHFLIPWIETAIDYDVRAKPRNISSLTGTKDLQMVNINCRVLSRPDVHALPKIYRTLGGDYDERVLPSIVNEVLKSVVAQFNASQLITQRERVSRLVRENLMKRAARFNILLDDVSLTHVQFSPEFTAAVEAKQIAQQDAQRATFYVDRARMEKQGFIVRAQGEGRAAQLIGEAIKNKPGFIELRKLETAREIANILSKSNNKVMLNASTLLLDDIK.

The helical; Signal-anchor for type II membrane protein transmembrane segment at 21–43 (GKYAFTGTGLLLALGLAGFAVQT) threads the bilayer. The AIM motif lies at 125 to 128 (YRTL).

The protein belongs to the prohibitin family. The mitochondrial prohibitin complex consists of two subunits (phb1 and phb2). The subunits assemble into a membrane-associated ring-shaped supercomplex of approximately 1 mDa.

It localises to the mitochondrion inner membrane. In terms of biological role, prohibitin probably acts as a holdase/unfoldase for the stabilization of newly synthesized mitochondrial proteins. Involved in mitophagy; may act as an adapter for atg8 that supports mitophagosome assembly. Negatively regulates the proteolytic processing of atg32 via the i-AAA protease. Acts as a negative regulator of the m-AAA protease. The sequence is that of Prohibitin-2 (phb2) from Schizosaccharomyces pombe (strain 972 / ATCC 24843) (Fission yeast).